We begin with the raw amino-acid sequence, 71 residues long: Protein MTH_1184 (71 aa).

The protein is Protein MTH_1184 of Methanothermobacter thermautotrophicus (strain ATCC 29096 / DSM 1053 / JCM 10044 / NBRC 100330 / Delta H) (Methanobacterium thermoautotrophicum).